Here is a 153-residue protein sequence, read N- to C-terminus: Prophage Rz endopeptidase RzpD (153 aa).

In terms of biological role, necessary for host cell lysis. It is believed to code for an endopeptidase that cleaves the amino-carboxyl cross-link between the diaminopimelic acid and D-alanine residues in the murein component of the bacterial cell wall. In Escherichia coli (strain K12), this protein is Prophage Rz endopeptidase RzpD (rzpD).